The chain runs to 376 residues: Alanine racemase (376 aa).

The active-site Proton acceptor; specific for D-alanine is lysine 44. Position 44 is an N6-(pyridoxal phosphate)lysine (lysine 44). Arginine 139 contacts substrate. Tyrosine 271 serves as the catalytic Proton acceptor; specific for L-alanine. Methionine 319 contributes to the substrate binding site.

The protein belongs to the alanine racemase family. The cofactor is pyridoxal 5'-phosphate.

The catalysed reaction is L-alanine = D-alanine. Its pathway is amino-acid biosynthesis; D-alanine biosynthesis; D-alanine from L-alanine: step 1/1. In terms of biological role, catalyzes the interconversion of L-alanine and D-alanine. May also act on other amino acids. This Bordetella petrii (strain ATCC BAA-461 / DSM 12804 / CCUG 43448) protein is Alanine racemase (alr).